We begin with the raw amino-acid sequence, 141 residues long: Protein archease (141 aa).

Residues Asp-19 and Asp-140 each coordinate Ca(2+).

This sequence belongs to the archease family.

In terms of biological role, activates the tRNA-splicing ligase complex by facilitating the enzymatic turnover of catalytic subunit RtcB. Acts by promoting the guanylylation of RtcB, a key intermediate step in tRNA ligation. Can also alter the NTP specificity of RtcB such that ATP, dGTP or ITP is used efficiently. This Thermoplasma acidophilum (strain ATCC 25905 / DSM 1728 / JCM 9062 / NBRC 15155 / AMRC-C165) protein is Protein archease.